The sequence spans 108 residues: ATP-dependent Clp protease adapter protein ClpS (108 aa).

A compositionally biased stretch (basic and acidic residues) spans 1-15; it reads MPHESSPDSQHEHGV. Residues 1–22 are disordered; it reads MPHESSPDSQHEHGVAVEAARP.

The protein belongs to the ClpS family. Binds to the N-terminal domain of the chaperone ClpA.

Functionally, involved in the modulation of the specificity of the ClpAP-mediated ATP-dependent protein degradation. This chain is ATP-dependent Clp protease adapter protein ClpS, found in Stenotrophomonas maltophilia (strain K279a).